We begin with the raw amino-acid sequence, 1016 residues long: UvrABC system protein A (1016 aa).

32–39 (GVSGSGKS) is an ATP binding site. The segment at 259–286 (CPEHGSVLEELEPRSFSFNSPYGACGDC) adopts a C4-type zinc-finger fold. ABC transporter domains lie at 315–627 (WTKK…KNSL) and 647–975 (GNGK…EYLR). Residue 679–686 (GPSGSGKS) participates in ATP binding. The segment at 778–804 (CEHCKGDGVMKIEMNFLPDIYVPCEVC) adopts a C4-type zinc-finger fold. The interval 984–1016 (EPRARGEKAEKPAKAKAPAKKRTKKQTELVEAD) is disordered. Residues 985-996 (PRARGEKAEKPA) show a composition bias toward basic and acidic residues.

Belongs to the ABC transporter superfamily. UvrA family. In terms of assembly, forms a heterotetramer with UvrB during the search for lesions.

The protein localises to the cytoplasm. Functionally, the UvrABC repair system catalyzes the recognition and processing of DNA lesions. UvrA is an ATPase and a DNA-binding protein. A damage recognition complex composed of 2 UvrA and 2 UvrB subunits scans DNA for abnormalities. When the presence of a lesion has been verified by UvrB, the UvrA molecules dissociate. This is UvrABC system protein A from Deinococcus radiodurans (strain ATCC 13939 / DSM 20539 / JCM 16871 / CCUG 27074 / LMG 4051 / NBRC 15346 / NCIMB 9279 / VKM B-1422 / R1).